The sequence spans 318 residues: Transaldolase (318 aa).

Catalysis depends on Lys126, which acts as the Schiff-base intermediate with substrate.

It belongs to the transaldolase family. Type 1 subfamily. As to quaternary structure, homodimer.

It is found in the cytoplasm. The enzyme catalyses D-sedoheptulose 7-phosphate + D-glyceraldehyde 3-phosphate = D-erythrose 4-phosphate + beta-D-fructose 6-phosphate. It functions in the pathway carbohydrate degradation; pentose phosphate pathway; D-glyceraldehyde 3-phosphate and beta-D-fructose 6-phosphate from D-ribose 5-phosphate and D-xylulose 5-phosphate (non-oxidative stage): step 2/3. Transaldolase is important for the balance of metabolites in the pentose-phosphate pathway. The protein is Transaldolase of Variovorax paradoxus (strain S110).